The sequence spans 359 residues: Probable dual-specificity RNA methyltransferase RlmN (359 aa).

The active-site Proton acceptor is the Glu91. The region spanning 97 to 329 is the Radical SAM core domain; it reads QHYGHSVCVT…KKNGVNCVVR (233 aa). Cys104 and Cys340 are joined by a disulfide. Residues Cys111, Cys115, and Cys118 each coordinate [4Fe-4S] cluster. S-adenosyl-L-methionine is bound by residues 163–164, Ser195, 218–220, and Asn296; these read GE and SLH. The active-site S-methylcysteine intermediate is Cys340.

It belongs to the radical SAM superfamily. RlmN family. [4Fe-4S] cluster is required as a cofactor.

The protein localises to the cytoplasm. The enzyme catalyses adenosine(2503) in 23S rRNA + 2 reduced [2Fe-2S]-[ferredoxin] + 2 S-adenosyl-L-methionine = 2-methyladenosine(2503) in 23S rRNA + 5'-deoxyadenosine + L-methionine + 2 oxidized [2Fe-2S]-[ferredoxin] + S-adenosyl-L-homocysteine. It carries out the reaction adenosine(37) in tRNA + 2 reduced [2Fe-2S]-[ferredoxin] + 2 S-adenosyl-L-methionine = 2-methyladenosine(37) in tRNA + 5'-deoxyadenosine + L-methionine + 2 oxidized [2Fe-2S]-[ferredoxin] + S-adenosyl-L-homocysteine. In terms of biological role, specifically methylates position 2 of adenine 2503 in 23S rRNA and position 2 of adenine 37 in tRNAs. This chain is Probable dual-specificity RNA methyltransferase RlmN, found in Streptococcus pyogenes serotype M3 (strain ATCC BAA-595 / MGAS315).